The primary structure comprises 800 residues: MSEIIQDLSLEDVLGDRFGRYSKYIIQERALPDVRDGLKPVQRRILYAMYSSGNTHDKNFRKSAKTVGDVIGQYHPHGDFSVYEAMVRLSQDWKLRHVLIEMHGNNGSIDNDPPAAMRYTEAKLSLLAEELLRDINKETVSFIPNYDDTTLEPMVLPSRFPNLLVNGSTGISAGYATDIPPHNLAEVIQATLKYIDNPDITVNQLMKYIKGPDFPTGGIIQGIDGIKKAYESGKGRIIVRSKVEEETLRNGRKQLIITEIPYEVNKSSLVKRIDELRADKKVDGIVEVRDETDRTGLRIAIELKKDVNSESIKNYLYKNSDLQISYNFNMVAISDGRPKLMGIRQIIDSYLNHQIEVVANRTKFELDNAEKRMHIVEGLIKALSILDKVIELIRSSKNKRDAKENLIEVFEFTEEQAEAIVMLQLYRLTNTDIVALEGEHKELEALIKQLRHILDNHDALLNVIKEELNEIKKKFKSERLSLIEAEIEEIKIDKEVMVPSEEVILSMTRHGYIKRTSIRSFNASGVEDIGLKDGDSLLKHQEVNTQDTVLVFTNKGRYLFIPVHKLADIRWKELGQHVSQIVPIEEDEVVINVFNEKDFNTDAFYVFATQNGMIKKSTVPLFKTTRFNKPLIATKVKENDDLISVMRFEKDQLITVITNKGMSLTYNTSELSDTGLRAAGVKSINLKAEDFVVMTEGVSENDTILMATQRGSLKRISFKILQVAKRAQRGITLLKELKKNPHRIVAAHVVTGEHSQYTLYSKSNEEHGLINDIHKSEQYTNGSFIVDTDDFGEVIDMYIS.

A Topo IIA-type catalytic domain is found at 31–495; sequence LPDVRDGLKP…EIEEIKIDKE (465 aa). The active-site O-(5'-phospho-DNA)-tyrosine intermediate is the tyrosine 119.

This sequence belongs to the type II topoisomerase GyrA/ParC subunit family. ParC type 2 subfamily. Heterotetramer composed of ParC and ParE.

It is found in the cell membrane. It catalyses the reaction ATP-dependent breakage, passage and rejoining of double-stranded DNA.. In terms of biological role, topoisomerase IV is essential for chromosome segregation. It relaxes supercoiled DNA. Performs the decatenation events required during the replication of a circular DNA molecule. This is DNA topoisomerase 4 subunit A from Staphylococcus aureus (strain Mu50 / ATCC 700699).